Consider the following 305-residue polypeptide: uncharacterized protein (305 aa).

3 helical membrane passes run 52-72 (TINL…SKII), 89-109 (IAGF…FIAA), and 120-140 (VIAI…GSLS).

This sequence belongs to the MscS (TC 1.A.23) family.

The protein resides in the cell membrane. This is an uncharacterized protein from Buchnera aphidicola subsp. Acyrthosiphon pisum (strain APS) (Acyrthosiphon pisum symbiotic bacterium).